Consider the following 427-residue polypeptide: Putative tyrosine recombinase XerC (427 aa).

Residues 1–81 (MTPQQLTEEY…HLRTIWGYAI (81 aa)) form the Core-binding (CB) domain. Residues 116–305 (RARSWLSMQV…DYDHMRAVLH (190 aa)) enclose the Tyr recombinase domain. Residues Arg-156, Lys-183, His-256, Arg-259, and His-283 contribute to the active site. Tyr-292 acts as the O-(3'-phospho-DNA)-tyrosine intermediate in catalysis. 2 disordered regions span residues 323 to 384 (SGSP…PPDT) and 401 to 427 (RAAT…DSLA). Over residues 350–362 (ARTEPSEPREHTQ) the composition is skewed to basic and acidic residues. The span at 402–413 (AATASAVPAATS) shows a compositional bias: low complexity.

It belongs to the 'phage' integrase family.

It is found in the cytoplasm. In terms of biological role, site-specific tyrosine recombinase, which acts by catalyzing the cutting and rejoining of the recombining DNA molecules. The chain is Putative tyrosine recombinase XerC from Pseudomonas aeruginosa.